The primary structure comprises 261 residues: Acidic leucine-rich nuclear phosphoprotein 32 family member A (261 aa).

4 LRR repeats span residues 16-37, 39-60, 61-83, and 84-105; these read QITE…TDEY, ALES…PKLP, NLKK…TTSP, and KLQY…KPLE. The LRRCT domain maps to 118–156; that stretch reads NDATQVDNYREKIFKMLPSLNFLDGFDCNDEEVQSDGDD. 2 stretches are compositionally biased toward acidic residues: residues 145 to 185 and 194 to 229; these read CNDE…EEAN and YNDD…DGDA. The interval 145–261 is disordered; that stretch reads CNDEEVQSDG…VRGKKRKHDG (117 aa). Residues 238 to 252 show a composition bias toward basic and acidic residues; that stretch reads AKDKDGEKEADESQV.

It belongs to the ANP32 family. In terms of processing, phosphorylated on serine residues.

It is found in the nucleus. The protein localises to the cytoplasm. Implicated in a number of cellular processes, including proliferation, differentiation, caspase-dependent and caspase-independent apoptosis, suppression of transformation (tumor suppressor), inhibition of protein phosphatase 2A, regulation of mRNA trafficking and stability, and inhibition of acetyltransferases as part of the INHAT (inhibitor of histone acetyltransferases) complex. The chain is Acidic leucine-rich nuclear phosphoprotein 32 family member A (Anp32a) from Drosophila melanogaster (Fruit fly).